Reading from the N-terminus, the 438-residue chain is Asparagine--tRNA ligase (438 aa).

Belongs to the class-II aminoacyl-tRNA synthetase family. As to quaternary structure, homodimer.

Its subcellular location is the cytoplasm. It catalyses the reaction tRNA(Asn) + L-asparagine + ATP = L-asparaginyl-tRNA(Asn) + AMP + diphosphate + H(+). This is Asparagine--tRNA ligase from Thermus thermophilus (strain ATCC BAA-163 / DSM 7039 / HB27).